A 406-amino-acid polypeptide reads, in one-letter code: Probable endo-xylogalacturonan hydrolase A (406 aa).

The signal sequence occupies residues 1–18; sequence MLYPRNLALFSLLSLSSA. PbH1 repeat units lie at residues 183–213, 214–235, 237–257, and 299–320; these read TQHVTFKNLRMDATSNSQNPPKNTDGFDIGA, STHVTISSVSVTNDDDCVAFKP, SNYVTVEDVTCTGSHGISVGS, and VKNVTFSDFNVRGCDYAFQIES. The active-site Proton donor is aspartate 228. The active site involves histidine 251. Asparagine 301 carries an N-linked (GlcNAc...) asparagine glycan.

This sequence belongs to the glycosyl hydrolase 28 family.

It is found in the secreted. Functionally, pectinolytic enzyme involved in the degradation of xylogalacturonan (xga), a galacturonan backbone heavily substituted with xylose, and which is one important component of the hairy regions of pectin. Activity requires a galacturonic acid backbone substituted with xylose. This is Probable endo-xylogalacturonan hydrolase A (xghA) from Aspergillus fumigatus (strain ATCC MYA-4609 / CBS 101355 / FGSC A1100 / Af293) (Neosartorya fumigata).